Reading from the N-terminus, the 256-residue chain is Hydroxypyruvate/pyruvate aldolase (256 aa).

Histidine 48 acts as the Proton acceptor in catalysis. Glutamate 152 and aspartate 178 together coordinate a divalent metal cation.

It belongs to the HpcH/HpaI aldolase family. It depends on a divalent metal cation as a cofactor.

The catalysed reaction is D-glyceraldehyde + pyruvate = 2-dehydro-3-deoxy-L-galactonate. Its function is as follows. Aldolase which can catalyze in vitro the aldolisation reaction between hydroxypyruvate (HPA) or pyruvate (PA) and D-glyceraldehyde (D-GA). The condensation of pyruvate and D-glyceraldehyde produces 2-dehydro-3-deoxy-L-galactonate as the major product. Has weak activity with hydroxypyruvate and D-glyceraldehyde. The sequence is that of Hydroxypyruvate/pyruvate aldolase from Roseobacter denitrificans (strain ATCC 33942 / OCh 114) (Erythrobacter sp. (strain OCh 114)).